The primary structure comprises 414 residues: MASAEIIAVGTELLLGQIVNSNAAFISQELAADGIYVYHHTVVGDNPTRLKEVIEIAENRSDILIFTGGLGPTEDDITKQILAAHLQKQLVEDEYHMNKINEYFTSRNRTMTENNKLQAVIIEDSIVLNNDFGFAAGMYLRENNHTYVLLPGPPSEMKPMFTSYANPLLLSESGDQNILESKIMRFFGIGESQLAADLNDLIVTQVNPTIATYAGDNEVVVRITATAKTKEEASRLVKETEEEILRREGTFLYGYGEVSLSELVTAMLLEKELTISAAESFTAGLFQAEIARFPGISKIFKGGMVTYSEETKQSILQVSPQVIKEKGVVSAECAKEMAENVSRLCKTDIGISFTGVAGPDSLEGHPAGTIWIGLSVKGYETEAFQFVYGRDRNHNRRRAVKQGFQLIKQFLDAN.

It belongs to the CinA family.

The polypeptide is Putative competence-damage inducible protein (Listeria monocytogenes serotype 4b (strain CLIP80459)).